Here is a 363-residue protein sequence, read N- to C-terminus: Ankyrin repeat domain-containing protein 40 (363 aa).

Residue methionine 1 is modified to N-acetylmethionine. ANK repeat units follow at residues 9-38 and 43-72; these read EQQERLREAAALGDIREVQKLVESGVDVNS and NGWTCLHWACKRNHGQVVSYLLQSGADREI. The interval 135-167 is disordered; the sequence is DSTQLQNGGPSPPPVSPPADSSPPLLPPTETPL. Pro residues predominate over residues 144–164; sequence PSPPPVSPPADSSPPLLPPTE. Serine 176 carries the post-translational modification Phosphoserine.

This chain is Ankyrin repeat domain-containing protein 40 (Ankrd40), found in Mus musculus (Mouse).